The primary structure comprises 488 residues: Catalase (488 aa).

A disordered region spans residues 1 to 24; that stretch reads MTDRRNLTTNQGVPIGDNQNSMTA. Positions 7 to 23 are enriched in polar residues; sequence LTTNQGVPIGDNQNSMT. Residues His55 and Asn128 contribute to the active site. Tyr338 serves as a coordination point for heme.

Belongs to the catalase family. Heme serves as cofactor.

The protein resides in the cytoplasm. It catalyses the reaction 2 H2O2 = O2 + 2 H2O. Functionally, decomposes hydrogen peroxide into water and oxygen; serves to protect cells from the toxic effects of hydrogen peroxide. This Listeria seeligeri protein is Catalase (kat).